We begin with the raw amino-acid sequence, 284 residues long: UPF0294 protein VV1_1880 (284 aa).

This sequence belongs to the UPF0294 family.

The protein localises to the cytoplasm. The polypeptide is UPF0294 protein VV1_1880 (Vibrio vulnificus (strain CMCP6)).